The following is a 218-amino-acid chain: Peptidyl-prolyl cis-trans isomerase FKBP7 (218 aa).

The N-terminal stretch at 1–19 is a signal peptide; that stretch reads MNLLFRLAVFLSLWCCSDA. Asn-41 and Asn-128 each carry an N-linked (GlcNAc...) asparagine glycan. One can recognise a PPIase FKBP-type domain in the interval 49 to 141; that stretch reads GDLLNAHYDG…MFEIELYAVT (93 aa). 2 EF-hand domains span residues 141 to 176 and 185 to 218; these read TKGPRSIETFKQIDTDNDRQLSKAEIELYLQKDFEK and YQKAVLEDIFKKNDHNGDGFISPKEYNVHQHDEL. 9 residues coordinate Ca(2+): Asp-154, Asp-156, Asp-158, Gln-160, Glu-165, Asp-198, Asn-200, Asp-202, and Glu-209. The interval 197–218 is disordered; sequence NDHNGDGFISPKEYNVHQHDEL. Positions 215 to 218 match the Prevents secretion from ER motif; that stretch reads HDEL.

Glycosylated. As to expression, expressed at highest levels in heart, lung and testis. Weakly expressed in kidney and lymph node. Little or no expression detected in brain, thymus, spleen and liver.

The protein resides in the endoplasmic reticulum lumen. It carries out the reaction [protein]-peptidylproline (omega=180) = [protein]-peptidylproline (omega=0). PPIases accelerate the folding of proteins during protein synthesis. The protein is Peptidyl-prolyl cis-trans isomerase FKBP7 (Fkbp7) of Mus musculus (Mouse).